The sequence spans 187 residues: Elongation factor P (187 aa).

Belongs to the elongation factor P family.

The protein localises to the cytoplasm. It functions in the pathway protein biosynthesis; polypeptide chain elongation. In terms of biological role, involved in peptide bond synthesis. Stimulates efficient translation and peptide-bond synthesis on native or reconstituted 70S ribosomes in vitro. Probably functions indirectly by altering the affinity of the ribosome for aminoacyl-tRNA, thus increasing their reactivity as acceptors for peptidyl transferase. The polypeptide is Elongation factor P (Granulibacter bethesdensis (strain ATCC BAA-1260 / CGDNIH1)).